The chain runs to 145 residues: Basic phospholipase A2 cL038 (145 aa).

An N-terminal signal peptide occupies residues 1–21 (MYPAHLLVLLAVCVSLLGASA). The propeptide occupies 22-27 (IPPLPL). Cystine bridges form between Cys38-Cys98, Cys54-Cys144, Cys56-Cys72, Cys71-Cys125, Cys78-Cys118, Cys87-Cys111, and Cys105-Cys116. 3 residues coordinate Ca(2+): Tyr55, Gly57, and Gly59. Residue His75 is part of the active site. Asp76 provides a ligand contact to Ca(2+). Residue Asp119 is part of the active site.

Belongs to the phospholipase A2 family. Group I subfamily. D49 sub-subfamily. It depends on Ca(2+) as a cofactor. As to expression, expressed by the venom gland.

It localises to the secreted. The catalysed reaction is a 1,2-diacyl-sn-glycero-3-phosphocholine + H2O = a 1-acyl-sn-glycero-3-phosphocholine + a fatty acid + H(+). PLA2 catalyzes the calcium-dependent hydrolysis of the 2-acyl groups in 3-sn-phosphoglycerides. The protein is Basic phospholipase A2 cL038 of Laticauda semifasciata (Black-banded sea krait).